The primary structure comprises 378 residues: Erythronate-4-phosphate dehydrogenase (378 aa).

Substrate is bound by residues Ser-45 and Thr-66. NAD(+) is bound by residues Asp-146 and Thr-175. Arg-208 is a catalytic residue. Residue Asp-232 coordinates NAD(+). Glu-237 is an active-site residue. His-254 acts as the Proton donor in catalysis. An NAD(+)-binding site is contributed by Gly-257. Tyr-258 serves as a coordination point for substrate.

This sequence belongs to the D-isomer specific 2-hydroxyacid dehydrogenase family. PdxB subfamily. In terms of assembly, homodimer.

It is found in the cytoplasm. It carries out the reaction 4-phospho-D-erythronate + NAD(+) = (R)-3-hydroxy-2-oxo-4-phosphooxybutanoate + NADH + H(+). Its pathway is cofactor biosynthesis; pyridoxine 5'-phosphate biosynthesis; pyridoxine 5'-phosphate from D-erythrose 4-phosphate: step 2/5. In terms of biological role, catalyzes the oxidation of erythronate-4-phosphate to 3-hydroxy-2-oxo-4-phosphonooxybutanoate. The polypeptide is Erythronate-4-phosphate dehydrogenase (Citrobacter koseri (strain ATCC BAA-895 / CDC 4225-83 / SGSC4696)).